The chain runs to 365 residues: Cobalt-precorrin-5B C(1)-methyltransferase (365 aa).

The protein belongs to the CbiD family.

The catalysed reaction is Co-precorrin-5B + S-adenosyl-L-methionine = Co-precorrin-6A + S-adenosyl-L-homocysteine. It functions in the pathway cofactor biosynthesis; adenosylcobalamin biosynthesis; cob(II)yrinate a,c-diamide from sirohydrochlorin (anaerobic route): step 6/10. Its function is as follows. Catalyzes the methylation of C-1 in cobalt-precorrin-5B to form cobalt-precorrin-6A. The sequence is that of Cobalt-precorrin-5B C(1)-methyltransferase from Geobacillus sp. (strain WCH70).